The primary structure comprises 245 residues: MSQTEPLDQDPVFQLKGSMLAITVLELARNDLDALDRQLAAKVALAPNFFNNAPLVLALDKLPAGQGVIDLPGLMRVCRSHGLRTLAIRASRIEDIAAAIAIELPVLPPSGARERPLEPLVGEEKKKPEKPPEPTIKPTKIITSPVRGGQQIYAQGGDLVVISSVSPGAELLADGNIHVYGPMRGRALAGIKGDTKARIFCQQLTAELVSIAGQYKVSEDLRRDPLWGASVQVNLSGDVLNIIRL.

The span at 113–132 (RERPLEPLVGEEKKKPEKPP) shows a compositional bias: basic and acidic residues. Residues 113–138 (RERPLEPLVGEEKKKPEKPPEPTIKP) are disordered.

This sequence belongs to the MinC family. As to quaternary structure, interacts with MinD and FtsZ.

In terms of biological role, cell division inhibitor that blocks the formation of polar Z ring septums. Rapidly oscillates between the poles of the cell to destabilize FtsZ filaments that have formed before they mature into polar Z rings. Prevents FtsZ polymerization. The polypeptide is Probable septum site-determining protein MinC (Pseudomonas fluorescens (strain SBW25)).